Consider the following 470-residue polypeptide: Light-independent protochlorophyllide reductase subunit N (470 aa).

The [4Fe-4S] cluster site is built by Cys-24, Cys-49, and Cys-109.

The protein belongs to the BchN/ChlN family. As to quaternary structure, protochlorophyllide reductase is composed of three subunits; ChlL, ChlN and ChlB. Forms a heterotetramer of two ChlB and two ChlN subunits. It depends on [4Fe-4S] cluster as a cofactor.

The enzyme catalyses chlorophyllide a + oxidized 2[4Fe-4S]-[ferredoxin] + 2 ADP + 2 phosphate = protochlorophyllide a + reduced 2[4Fe-4S]-[ferredoxin] + 2 ATP + 2 H2O. The protein operates within porphyrin-containing compound metabolism; chlorophyll biosynthesis (light-independent). In terms of biological role, component of the dark-operative protochlorophyllide reductase (DPOR) that uses Mg-ATP and reduced ferredoxin to reduce ring D of protochlorophyllide (Pchlide) to form chlorophyllide a (Chlide). This reaction is light-independent. The NB-protein (ChlN-ChlB) is the catalytic component of the complex. The polypeptide is Light-independent protochlorophyllide reductase subunit N (Acaryochloris marina (strain MBIC 11017)).